A 205-amino-acid chain; its full sequence is Small ribosomal subunit protein uS4 (205 aa).

Basic and acidic residues predominate over residues 1–16 (MSKRESSKYKIDRRMG). The interval 1–46 (MSKRESSKYKIDRRMGENIWGRPKSPVNRREYGPGQHGQRRKGKLS) is disordered. The region spanning 94-157 (SRLDAIVYRA…KQLVIVLEAV (64 aa)) is the S4 RNA-binding domain.

Belongs to the universal ribosomal protein uS4 family. In terms of assembly, part of the 30S ribosomal subunit. Contacts protein S5. The interaction surface between S4 and S5 is involved in control of translational fidelity.

One of the primary rRNA binding proteins, it binds directly to 16S rRNA where it nucleates assembly of the body of the 30S subunit. Its function is as follows. With S5 and S12 plays an important role in translational accuracy. The chain is Small ribosomal subunit protein uS4 from Rhizobium leguminosarum bv. trifolii (strain WSM2304).